A 1357-amino-acid chain; its full sequence is DNA-directed RNA polymerase subunit beta (1357 aa).

Belongs to the RNA polymerase beta chain family. The RNAP catalytic core consists of 2 alpha, 1 beta, 1 beta' and 1 omega subunit. When a sigma factor is associated with the core the holoenzyme is formed, which can initiate transcription.

It carries out the reaction RNA(n) + a ribonucleoside 5'-triphosphate = RNA(n+1) + diphosphate. DNA-dependent RNA polymerase catalyzes the transcription of DNA into RNA using the four ribonucleoside triphosphates as substrates. The polypeptide is DNA-directed RNA polymerase subunit beta (Acinetobacter baumannii (strain ATCC 17978 / DSM 105126 / CIP 53.77 / LMG 1025 / NCDC KC755 / 5377)).